The following is a 349-amino-acid chain: Green-sensitive opsin-2 (349 aa).

Over 1–36 (MNGTEGNNFYVPLSNRTGLVRSPFEYPQYYLAEPWQ) the chain is Extracellular. 2 N-linked (GlcNAc...) asparagine glycosylation sites follow: N2 and N15. A helical transmembrane segment spans residues 37–61 (FKLLAVYMFFLICLGLPINGLTLIC). The Cytoplasmic segment spans residues 62–73 (TAQHKKLRQPLN). A helical transmembrane segment spans residues 74-99 (FILVNLAVAGAIMVCFGFTVTFYTAI). Residues 100 to 113 (NGYFALGPTGCAVE) lie on the Extracellular side of the membrane. A disulfide bond links C110 and C187. A helical transmembrane segment spans residues 114-133 (GFMATLGGEVALWSLVVLAI). Topologically, residues 134–152 (ERYIVVCKPMGSFKFSSTH) are cytoplasmic. The helical transmembrane segment at 153-176 (ASAGIAFTWVMAMACAAPPLVGWS) threads the bilayer. Residues 177 to 202 (RYIPEGIQCSCGPDYYTLNPEYNNES) lie on the Extracellular side of the membrane. A helical membrane pass occupies residues 203 to 230 (YVLYMFICHFILPVTIIFFTYGRLVCTV). At 231–252 (KAAAAQQQDSASTQKAEREVTK) the chain is on the cytoplasmic side. A helical membrane pass occupies residues 253–276 (MVILMVLGFLVAWTPYATVAAWIF). Residues 277–284 (FNKGAAFS) are Extracellular-facing. The chain crosses the membrane as a helical span at residues 285-309 (AQFMAIPAFFSKTSALYNPVIYVLL). At K296 the chain carries N6-(retinylidene)lysine. Topologically, residues 310 to 349 (NKQFRSCMLTTLFCGKNPLGDEESSTVSTSKTEVSSVSPA) are cytoplasmic. The disordered stretch occupies residues 329–349 (GDEESSTVSTSKTEVSSVSPA). Residues 334-349 (STVSTSKTEVSSVSPA) are compositionally biased toward low complexity.

This sequence belongs to the G-protein coupled receptor 1 family. Opsin subfamily. Phosphorylated on some or all of the serine and threonine residues present in the C-terminal region. As to expression, the color pigments are found in the cone photoreceptor cells.

The protein resides in the membrane. Its function is as follows. Visual pigments are the light-absorbing molecules that mediate vision. They consist of an apoprotein, opsin, covalently linked to cis-retinal. This Carassius auratus (Goldfish) protein is Green-sensitive opsin-2.